The chain runs to 319 residues: ADP-L-glycero-D-manno-heptose-6-epimerase (319 aa).

NADP(+) is bound by residues 10–11, 31–32, Lys-38, Lys-53, and 75–79; these read FI, DD, and EGACS. Tyr-139 acts as the Proton acceptor in catalysis. Lys-143 contributes to the NADP(+) binding site. A substrate-binding site is contributed by Asn-168. Residues Val-169 and Lys-177 each contribute to the NADP(+) site. The Proton acceptor role is filled by Lys-177. Substrate contacts are provided by residues Ser-179, His-186, 200 to 203, Arg-213, and Tyr-281; that span reads FEGA.

The protein belongs to the NAD(P)-dependent epimerase/dehydratase family. HldD subfamily. In terms of assembly, homopentamer. Requires NADP(+) as cofactor.

It carries out the reaction ADP-D-glycero-beta-D-manno-heptose = ADP-L-glycero-beta-D-manno-heptose. It functions in the pathway nucleotide-sugar biosynthesis; ADP-L-glycero-beta-D-manno-heptose biosynthesis; ADP-L-glycero-beta-D-manno-heptose from D-glycero-beta-D-manno-heptose 7-phosphate: step 4/4. In terms of biological role, catalyzes the interconversion between ADP-D-glycero-beta-D-manno-heptose and ADP-L-glycero-beta-D-manno-heptose via an epimerization at carbon 6 of the heptose. The protein is ADP-L-glycero-D-manno-heptose-6-epimerase of Aromatoleum aromaticum (strain DSM 19018 / LMG 30748 / EbN1) (Azoarcus sp. (strain EbN1)).